The chain runs to 429 residues: 3-phosphoshikimate 1-carboxyvinyltransferase (429 aa).

3-phosphoshikimate is bound by residues Lys22, Ser23, and Arg27. Lys22 lines the phosphoenolpyruvate pocket. The phosphoenolpyruvate site is built by Gly94 and Arg122. Residues Ser167, Gln169, Asp315, and Lys342 each coordinate 3-phosphoshikimate. Residue Gln169 participates in phosphoenolpyruvate binding. Asp315 serves as the catalytic Proton acceptor. Phosphoenolpyruvate contacts are provided by Arg346 and Arg388.

Belongs to the EPSP synthase family. As to quaternary structure, monomer.

It localises to the cytoplasm. It carries out the reaction 3-phosphoshikimate + phosphoenolpyruvate = 5-O-(1-carboxyvinyl)-3-phosphoshikimate + phosphate. It participates in metabolic intermediate biosynthesis; chorismate biosynthesis; chorismate from D-erythrose 4-phosphate and phosphoenolpyruvate: step 6/7. Catalyzes the transfer of the enolpyruvyl moiety of phosphoenolpyruvate (PEP) to the 5-hydroxyl of shikimate-3-phosphate (S3P) to produce enolpyruvyl shikimate-3-phosphate and inorganic phosphate. In Citrifermentans bemidjiense (strain ATCC BAA-1014 / DSM 16622 / JCM 12645 / Bem) (Geobacter bemidjiensis), this protein is 3-phosphoshikimate 1-carboxyvinyltransferase.